Here is a 99-residue protein sequence, read N- to C-terminus: Plastocyanin B'/B'' (99 aa).

Positions 1–99 constitute a Plastocyanin-like domain; the sequence is IEVLLGSDDG…AGMVGKVTVN (99 aa). Cu cation contacts are provided by H37, C84, H87, and M92.

The protein belongs to the plastocyanin family. Cu(2+) serves as cofactor.

The protein resides in the plastid. Its subcellular location is the chloroplast thylakoid membrane. In terms of biological role, participates in electron transfer between P700 and the cytochrome b6-f complex in photosystem I. The polypeptide is Plastocyanin B'/B'' (Nicotiana tabacum (Common tobacco)).